The following is a 119-amino-acid chain: MSRRNQAVGAYGERCALQHLITAGMRPVERNWRCPHGEIDIIAWDGPVLAICEVKTRRTDTFGAPAAAVTGPKARRLRVLAAQWLAETGTRADEVRFDVLSVRVTAAGPPRIEHLKGAF.

This sequence belongs to the UPF0102 family.

This is UPF0102 protein Sare_1228 from Salinispora arenicola (strain CNS-205).